A 326-amino-acid chain; its full sequence is Flavanone 3-dioxygenase 3 (326 aa).

Polar residues predominate over residues 1 to 15 (MSDTSKGIPQEQLPS). The interval 1 to 21 (MSDTSKGIPQEQLPSQELHPP) is disordered. The Fe2OG dioxygenase domain occupies 175–276 (EGLQLLSVNC…RISLASIHGF (102 aa)). Residues histidine 200, aspartate 202, and histidine 257 each contribute to the Fe cation site. 2-oxoglutarate is bound at residue arginine 267.

It belongs to the iron/ascorbate-dependent oxidoreductase family. It depends on Fe(2+) as a cofactor. The cofactor is L-ascorbate. As to expression, expressed at very low levels in roots, leaves, stems and seeds.

The catalysed reaction is a (2S)-flavan-4-one + 2-oxoglutarate + O2 = a (2R,3R)-dihydroflavonol + succinate + CO2. It functions in the pathway secondary metabolite biosynthesis; flavonoid biosynthesis. Functionally, catalyzes the 3-beta-hydroxylation of 2S-flavanones to 2R,3R-dihydroflavonols which are intermediates in the biosynthesis of flavonols, anthocyanidins, catechins and proanthocyanidins in plants. Converts (2S)-eriodictyol to (+)-taxifolin and (2S)-naringenin to (+)-(2R/3R)-dihydrokaempferol in vitro. The chain is Flavanone 3-dioxygenase 3 from Oryza sativa subsp. japonica (Rice).